The primary structure comprises 495 residues: Cytochrome P450 monooxygenase 64 (495 aa).

A helical membrane pass occupies residues 2–22 (FLQIVTSVLATGLLYALISVL). Asn25 and Asn198 each carry an N-linked (GlcNAc...) asparagine glycan. Cys428 contacts heme.

It belongs to the cytochrome P450 family. Requires heme as cofactor.

It is found in the membrane. Its pathway is secondary metabolite biosynthesis. In terms of biological role, cytochrome P450 monooxygenase that is able to use 4-ethoxybenzoic acid as a substrate for oxidation. The sequence is that of Cytochrome P450 monooxygenase 64 from Postia placenta (strain ATCC 44394 / Madison 698-R) (Brown rot fungus).